Consider the following 131-residue polypeptide: Ribonuclease P protein component (131 aa).

This sequence belongs to the RnpA family. As to quaternary structure, consists of a catalytic RNA component (M1 or rnpB) and a protein subunit.

The catalysed reaction is Endonucleolytic cleavage of RNA, removing 5'-extranucleotides from tRNA precursor.. In terms of biological role, RNaseP catalyzes the removal of the 5'-leader sequence from pre-tRNA to produce the mature 5'-terminus. It can also cleave other RNA substrates such as 4.5S RNA. The protein component plays an auxiliary but essential role in vivo by binding to the 5'-leader sequence and broadening the substrate specificity of the ribozyme. The sequence is that of Ribonuclease P protein component from Synechococcus sp. (strain WH7803).